Here is a 127-residue protein sequence, read N- to C-terminus: Holo-[acyl-carrier-protein] synthase (127 aa).

Residues Asp-9 and Glu-58 each coordinate Mg(2+).

The protein belongs to the P-Pant transferase superfamily. AcpS family. Mg(2+) is required as a cofactor.

It localises to the cytoplasm. It catalyses the reaction apo-[ACP] + CoA = holo-[ACP] + adenosine 3',5'-bisphosphate + H(+). Transfers the 4'-phosphopantetheine moiety from coenzyme A to a Ser of acyl-carrier-protein. This Shewanella sp. (strain W3-18-1) protein is Holo-[acyl-carrier-protein] synthase.